The chain runs to 273 residues: Holocytochrome c-type synthase (273 aa).

Over residues 1 to 18 (MGLSASSPAATAQSAAEP) the composition is skewed to low complexity. The segment at 1–39 (MGLSASSPAATAQSAAEPSKQHQVASPPSECPMHQEKMR) is disordered. 2 HRM repeats span residues 30 to 35 (ECPMHQ) and 40 to 45 (GCPMHM).

The protein belongs to the cytochrome c-type heme lyase family.

The protein resides in the mitochondrion inner membrane. The catalysed reaction is holo-[cytochrome c] = apo-[cytochrome c] + heme b. In terms of biological role, lyase that catalyzes the covalent linking of the heme group to the cytochrome C apoprotein to produce the mature functional cytochrome. This Gallus gallus (Chicken) protein is Holocytochrome c-type synthase (HCCS).